The sequence spans 155 residues: Endoribonuclease YbeY (155 aa).

Zn(2+) is bound by residues His-120, His-124, and His-130.

Belongs to the endoribonuclease YbeY family. It depends on Zn(2+) as a cofactor.

The protein resides in the cytoplasm. Functionally, single strand-specific metallo-endoribonuclease involved in late-stage 70S ribosome quality control and in maturation of the 3' terminus of the 16S rRNA. This Staphylococcus aureus (strain bovine RF122 / ET3-1) protein is Endoribonuclease YbeY.